The following is a 128-amino-acid chain: SH2 domain-containing protein 1A (128 aa).

Positions 6–102 (VYHGKISRET…GIVIPLQYPV (97 aa)) constitute an SH2 domain. The segment at 67–92 (ETAPGVHKRFFRKIKNLISAFQKPDQ) is interaction with FYN SH3 domain. Lysine 89 bears the N6-acetyllysine mark. A disordered region spans residues 104–128 (KKPSARSTQGATGRRDDPDVFLKTP). Basic and acidic residues predominate over residues 116 to 128 (GRRDDPDVFLKTP).

In terms of assembly, interacts with CD84, CD244, LY9, SLAMF1 and FYN. Interacts with NTRK1, NTRK2 and NTRK3.

It is found in the cytoplasm. Its function is as follows. Cytoplasmic adapter regulating receptors of the signaling lymphocytic activation molecule (SLAM) family such as SLAMF1, CD244, LY9, CD84, SLAMF6 and SLAMF7. In SLAM signaling seems to cooperate with SH2D1B/EAT-2. Initially it has been proposed that association with SLAMF1 prevents SLAMF1 binding to inhibitory effectors including INPP5D/SHIP1 and PTPN11/SHP-2. However, by simultaneous interactions, recruits FYN which subsequently phosphorylates and activates SLAMF1. Positively regulates CD244/2B4- and CD84-mediated natural killer (NK) cell functions. Can also promote CD48-, SLAMF6 -, LY9-, and SLAMF7-mediated NK cell activation. In the context of NK cell-mediated cytotoxicity enhances conjugate formation with target cells. May also regulate the activity of the neurotrophin receptors NTRK1, NTRK2 and NTRK3. This chain is SH2 domain-containing protein 1A (SH2D1A), found in Bos taurus (Bovine).